The following is a 177-amino-acid chain: MAIKSRIRTIPDYPKKGIMFRDITTLLKDPVGFRLVIDQLSQHYIENGVDFDMIVGMEARGFIIGGALSYTLGKGFVPIRKPGKLPGEVVDQEYQLEYGTDKVEMHIDALEKGSRVLLVDDLLATGGTAMAGASLVEKVGGVIAEMAFIVNLPDIGGQKKLEEKGYKLFCLTEFEGE.

It belongs to the purine/pyrimidine phosphoribosyltransferase family. In terms of assembly, homodimer.

The protein localises to the cytoplasm. The enzyme catalyses AMP + diphosphate = 5-phospho-alpha-D-ribose 1-diphosphate + adenine. It functions in the pathway purine metabolism; AMP biosynthesis via salvage pathway; AMP from adenine: step 1/1. Its function is as follows. Catalyzes a salvage reaction resulting in the formation of AMP, that is energically less costly than de novo synthesis. The protein is Adenine phosphoribosyltransferase of Chlorobium phaeobacteroides (strain BS1).